A 141-amino-acid chain; its full sequence is MAEDPEAVLQLPAAPAAAAGESLLELSPETAIPEPPSSVAVSPGTEEPPGDTKKKIDILLKAVGDTPIMKTKKWAVERTRTVQALIDFIRKFLRLLASEQLFIYVNQSFAPSPDQEVGTLYECFGSDGKLVLHYCKSQAWG.

A disordered region spans residues 24–54 (LELSPETAIPEPPSSVAVSPGTEEPPGDTKK). Gly141 participates in a covalent cross-link: Glycyl lysine isopeptide (Gly-Lys) (interchain with K-? in acceptor protein).

The protein belongs to the ATG12 family. In terms of assembly, forms a conjugate with ATG5. Part of the minor complex composed of 4 sets of ATG12-ATG5 and ATG16L1 (400 kDa); this complex interacts with ATG3 leading to disruption of ATG7 interaction and promotion of ATG8-like proteins lipidation. Forms an 800-kDa complex composed of ATG12-ATG5 and ATG16L2. Interacts with DHX58/RIG-1, IFIH1/MDA5 and MAVS/IPS-1 in monomeric form as well as in ATG12-ATG5 conjugate. The interaction with MAVS is further enhanced upon vesicular stomatitis virus (VSV) infection. Interacts with ATG3; this interaction is essential for phosphatidylethanolamine (PE)-conjugated ATG8-like proteins formation. Interacts with ATG7. Interacts with ATG10. The ATG12-ATG5 conjugate interacts with RAB33A; this interaction is bridged by ATG16L1 and promotes ATG12-ATG5-ATG16L1 complex recruitment to phagophores. Interacts with TECPR1. Interacts with SH3BGRL. The ATG12-ATG5 conjugate interacts with PDCD6IP (via the BRO1 domain); this interaction is bridged by ATG12 and promotes multiple PDCD6IP-mediated functions such as endolysosomal trafficking, macroautophagy and exosome biogenesis. Post-translationally, acetylated by EP300.

It localises to the cytoplasm. Its subcellular location is the preautophagosomal structure membrane. Ubiquitin-like protein involved in autophagy vesicles formation. Conjugation with ATG5 through a ubiquitin-like conjugating system involving also ATG7 as an E1-like activating enzyme and ATG10 as an E2-like conjugating enzyme, is essential for its function. The ATG12-ATG5 conjugate acts as an E3-like enzyme which is required for lipidation of ATG8 family proteins and their association to the vesicle membranes. The ATG12-ATG5 conjugate also negatively regulates the innate antiviral immune response by blocking the type I IFN production pathway through direct association with RARRES3 and MAVS. Also plays a role in translation or delivery of incoming viral RNA to the translation apparatus. As part of the ATG8 conjugation system with ATG5 and ATG16L1, required for recruitment of LRRK2 to stressed lysosomes and induction of LRRK2 kinase activity in response to lysosomal stress. This is Ubiquitin-like protein ATG12 from Rattus norvegicus (Rat).